The primary structure comprises 408 residues: tRNA-specific 2-thiouridylase MnmA (408 aa).

Residues 38–45 (GMSGGVDS) and Met-64 each bind ATP. The tract at residues 124–126 (NPD) is interaction with target base in tRNA. The Nucleophile role is filled by Cys-129. Cys-129 and Cys-231 form a disulfide bridge. Gly-153 lines the ATP pocket. Residues 181 to 183 (KDQ) are interaction with tRNA. The active-site Cysteine persulfide intermediate is Cys-231. The interval 348–349 (RY) is interaction with tRNA.

It belongs to the MnmA/TRMU family.

The protein resides in the cytoplasm. The enzyme catalyses S-sulfanyl-L-cysteinyl-[protein] + uridine(34) in tRNA + AH2 + ATP = 2-thiouridine(34) in tRNA + L-cysteinyl-[protein] + A + AMP + diphosphate + H(+). Its function is as follows. Catalyzes the 2-thiolation of uridine at the wobble position (U34) of tRNA, leading to the formation of s(2)U34. The protein is tRNA-specific 2-thiouridylase MnmA of Psychrobacter cryohalolentis (strain ATCC BAA-1226 / DSM 17306 / VKM B-2378 / K5).